We begin with the raw amino-acid sequence, 475 residues long: Argininosuccinate lyase (475 aa).

Belongs to the lyase 1 family. Argininosuccinate lyase subfamily.

The protein resides in the cytoplasm. It carries out the reaction 2-(N(omega)-L-arginino)succinate = fumarate + L-arginine. It functions in the pathway amino-acid biosynthesis; L-arginine biosynthesis; L-arginine from L-ornithine and carbamoyl phosphate: step 3/3. The sequence is that of Argininosuccinate lyase from Leifsonia xyli subsp. xyli (strain CTCB07).